Consider the following 361-residue polypeptide: AP2/ERF and B3 domain-containing transcription repressor TEM1 (361 aa).

A disordered region spans residues 1–73 (MEYSCVDDSS…SRKLPSSKYK (73 aa)). The span at 9–27 (SSTTSESLSISTTPKPTTT) shows a compositional bias: low complexity. A DNA-binding region (AP2/ERF) is located at residues 71–126 (KYKGVVPQPNGRWGAQIYEKHQRVWLGTFNEEEEAASSYDIAVRRFRGRDAVTNFK). Positions 195 to 306 (FEKTVTPSDV…QLYIHWKVRS (112 aa)) form a DNA-binding region, TF-B3.

It belongs to the AP2/ERF transcription factor family. RAV subfamily. In terms of assembly, interacts with FT. Expressed in leaves.

The protein resides in the nucleus. Transcriptional repressor of flowering time on long day plants. Acts directly on FT expression by binding 5'-CAACA-3' and 5'-CACCTG-3 sequences. Functionally redundant with TEM2. In Arabidopsis thaliana (Mouse-ear cress), this protein is AP2/ERF and B3 domain-containing transcription repressor TEM1 (TEM1).